The chain runs to 234 residues: Triosephosphate isomerase (234 aa).

Residue 8–10 coordinates substrate; sequence NFK. Histidine 90 functions as the Electrophile in the catalytic mechanism. The Proton acceptor role is filled by glutamate 159. Substrate contacts are provided by glycine 165 and serine 197.

The protein belongs to the triosephosphate isomerase family. As to quaternary structure, homodimer.

The protein resides in the cytoplasm. It carries out the reaction D-glyceraldehyde 3-phosphate = dihydroxyacetone phosphate. It functions in the pathway carbohydrate biosynthesis; gluconeogenesis. It participates in carbohydrate degradation; glycolysis; D-glyceraldehyde 3-phosphate from glycerone phosphate: step 1/1. In terms of biological role, involved in the gluconeogenesis. Catalyzes stereospecifically the conversion of dihydroxyacetone phosphate (DHAP) to D-glyceraldehyde-3-phosphate (G3P). This is Triosephosphate isomerase from Helicobacter acinonychis (strain Sheeba).